Here is a 418-residue protein sequence, read N- to C-terminus: Tyrosine--tRNA ligase (418 aa).

Residue Tyr-34 coordinates L-tyrosine. Residues 39-48 carry the 'HIGH' region motif; that stretch reads PTADSLHLGH. 2 residues coordinate L-tyrosine: Tyr-169 and Gln-173. The 'KMSKS' region motif lies at 229–233; that stretch reads KFGKS. ATP is bound at residue Lys-232. The S4 RNA-binding domain maps to 352–418; it reads LNLVDMLVTA…GKKKYAVLTY (67 aa).

The protein belongs to the class-I aminoacyl-tRNA synthetase family. TyrS type 1 subfamily. In terms of assembly, homodimer.

Its subcellular location is the cytoplasm. The enzyme catalyses tRNA(Tyr) + L-tyrosine + ATP = L-tyrosyl-tRNA(Tyr) + AMP + diphosphate + H(+). In terms of biological role, catalyzes the attachment of tyrosine to tRNA(Tyr) in a two-step reaction: tyrosine is first activated by ATP to form Tyr-AMP and then transferred to the acceptor end of tRNA(Tyr). This chain is Tyrosine--tRNA ligase, found in Streptococcus pyogenes serotype M18 (strain MGAS8232).